The following is a 597-amino-acid chain: MGEALNGLKRNIMCGDARESHIGQKVTVMGWVQRNRNLGGLQFIDLRDREGILQVVFNDDLGEEILEKAKSIRPEYCIAVTGEIVKRESVNPNMPTGMVELKAEELKILSESDTPPIYIKEDLDAAESIRLKYRYLDLRRPDMQNIFKIRHKTTKAIRDYLDQNGFLEMETPILTKSTPEGARDYLVPSRNYPGMFYALPQSPQLFKQLLMVSGFDRYFQIVKCFRDEDLRANRQPEFTQVDLEMSFVEQDDVMALNEGLIKHVFKEVLGVDVKTPIKRMTFKDAMEKYGSDKPDLRFGMEITNLSDVVKECGFKVFTDAVANGGSVRGLCLEGGASMGRKDIDRLGEFVKTFKAKGLAWIQLKEEGVKSPIAKFFSEEELNKIIETMGAKTGDLILIVADKNSVVLKALGELRLELSRKFDLVKDKSEFNFTWITEFDLLEYDEEEGRYFAAHHPFTMPMDEDIKYLDTDPGRVRAKAYDLVLNGEELGGGSIRIHDTKLQEKMFEVLGFTQESAWERFGFLLEAFKFGPPPHGGLAFGLDRMIMFLAGTENIKDVITFPKNQNAFCYLTEAPNIVDEEQLKELGIETIKKEDTAE.

L-aspartate is bound at residue Glu-180. The interval 204 to 207 (QLFK) is aspartate. Arg-226 is an L-aspartate binding site. Residues 226-228 (RDE) and Gln-235 contribute to the ATP site. Residue His-454 participates in L-aspartate binding. Glu-488 is a binding site for ATP. An L-aspartate-binding site is contributed by Arg-495. 540 to 543 (GLDR) serves as a coordination point for ATP.

This sequence belongs to the class-II aminoacyl-tRNA synthetase family. Type 1 subfamily. Homodimer.

The protein localises to the cytoplasm. It carries out the reaction tRNA(Asp) + L-aspartate + ATP = L-aspartyl-tRNA(Asp) + AMP + diphosphate. Its function is as follows. Catalyzes the attachment of L-aspartate to tRNA(Asp) in a two-step reaction: L-aspartate is first activated by ATP to form Asp-AMP and then transferred to the acceptor end of tRNA(Asp). The polypeptide is Aspartate--tRNA ligase (Clostridium perfringens (strain ATCC 13124 / DSM 756 / JCM 1290 / NCIMB 6125 / NCTC 8237 / Type A)).